A 134-amino-acid chain; its full sequence is MRHRQSGRQLNRNSSHRQAMFRNMASSLVKHGVIKTTVAKAKELRRVLEPLITLAKTDSVANRRLAFARTQDKEVVGILFNELGARYQERPGGYTRILKCGFRTGDKAPMAYIELVDRPVVEDAPEVVEESAEA.

The protein belongs to the bacterial ribosomal protein bL17 family. As to quaternary structure, part of the 50S ribosomal subunit. Contacts protein L32.

The protein is Large ribosomal subunit protein bL17 of Colwellia psychrerythraea (strain 34H / ATCC BAA-681) (Vibrio psychroerythus).